Consider the following 227-residue polypeptide: Cytidylate kinase (227 aa).

12–20 serves as a coordination point for ATP; the sequence is GPSGAGKGT.

It belongs to the cytidylate kinase family. Type 1 subfamily.

It localises to the cytoplasm. The enzyme catalyses CMP + ATP = CDP + ADP. The catalysed reaction is dCMP + ATP = dCDP + ADP. This is Cytidylate kinase from Xanthomonas oryzae pv. oryzae (strain PXO99A).